The sequence spans 443 residues: MSNIKTQDVPRVGFVSLGCPKATSDSEHILTRLRAEGYEISGSYDAADLVVVNTCGFIDAAVEESLDAIGEALAENGRVIVTGCLGAKDDVILAAHPQVLAVTGPHATEEVMQAVHRHLPKPHDPFSDLVPPQGIRLTPQHYAYLKISEGCNHRCTFCIIPSMRGDLVSRPIHDVMREAEALADAGVKELLVISQDTSAYGVDVKYRTGFWGGKPVKTRLYDLANALGELGIWIRMHYVYPYPSVDDLIPLMAEGKILPYLDVPFQHASPRILKAMKRPANAENVLERVRKWREICPDLTIRSTFITGFPGETEEDFEQLLQFLEAAQLDRVGAFAYSPVEGAAANDLPDAVPDEVREERRARLMDFQEDISTQRLEAKIGREMTVLVDDVDEEGALARSPGDAPEIDGLVVIPDGEGLAPGDFVRVRITDCDIHDLYAERVV.

The 111-residue stretch at 10–120 (PRVGFVSLGC…VMQAVHRHLP (111 aa)) folds into the MTTase N-terminal domain. [4Fe-4S] cluster contacts are provided by cysteine 19, cysteine 55, cysteine 84, cysteine 151, cysteine 155, and cysteine 158. The Radical SAM core domain maps to 137–375 (LTPQHYAYLK…DFQEDISTQR (239 aa)). In terms of domain architecture, TRAM spans 377 to 443 (EAKIGREMTV…IHDLYAERVV (67 aa)).

It belongs to the methylthiotransferase family. RimO subfamily. [4Fe-4S] cluster is required as a cofactor.

It localises to the cytoplasm. The enzyme catalyses L-aspartate(89)-[ribosomal protein uS12]-hydrogen + (sulfur carrier)-SH + AH2 + 2 S-adenosyl-L-methionine = 3-methylsulfanyl-L-aspartate(89)-[ribosomal protein uS12]-hydrogen + (sulfur carrier)-H + 5'-deoxyadenosine + L-methionine + A + S-adenosyl-L-homocysteine + 2 H(+). Catalyzes the methylthiolation of an aspartic acid residue of ribosomal protein uS12. This is Ribosomal protein uS12 methylthiotransferase RimO from Azoarcus sp. (strain BH72).